The primary structure comprises 417 residues: Imidazolonepropionase (417 aa).

Residues His77 and His79 each contribute to the Fe(3+) site. Zn(2+) contacts are provided by His77 and His79. 3 residues coordinate 4-imidazolone-5-propanoate: Arg86, Tyr149, and His182. Tyr149 is an N-formimidoyl-L-glutamate binding site. His244 lines the Fe(3+) pocket. His244 serves as a coordination point for Zn(2+). A 4-imidazolone-5-propanoate-binding site is contributed by Glu247. Residue Asp323 coordinates Fe(3+). Asp323 lines the Zn(2+) pocket. Asn325 serves as a coordination point for N-formimidoyl-L-glutamate.

The protein belongs to the metallo-dependent hydrolases superfamily. HutI family. Zn(2+) serves as cofactor. It depends on Fe(3+) as a cofactor.

The protein localises to the cytoplasm. The catalysed reaction is 4-imidazolone-5-propanoate + H2O = N-formimidoyl-L-glutamate. Its pathway is amino-acid degradation; L-histidine degradation into L-glutamate; N-formimidoyl-L-glutamate from L-histidine: step 3/3. Functionally, catalyzes the hydrolytic cleavage of the carbon-nitrogen bond in imidazolone-5-propanoate to yield N-formimidoyl-L-glutamate. It is the third step in the universal histidine degradation pathway. This is Imidazolonepropionase from Halobacterium salinarum (strain ATCC 29341 / DSM 671 / R1).